The primary structure comprises 456 residues: Bifunctional protein GlmU (456 aa).

A pyrophosphorylase region spans residues 1 to 228 (MKLKAIILAA…YEDIMAVNSR (228 aa)). UDP-N-acetyl-alpha-D-glucosamine-binding positions include 8–11 (LAAG), Lys-22, Gln-72, 77–78 (GT), 99–101 (YGD), Gly-138, Glu-153, Asn-168, and Asn-226. Asp-101 is a Mg(2+) binding site. Asn-226 contacts Mg(2+). Residues 229–249 (EQLAEVEEVMQRRIVKKHMEA) form a linker region. An N-acetyltransferase region spans residues 250-456 (GVTFIDPQST…WVARKGVGKK (207 aa)). Residues Arg-331 and Lys-349 each contribute to the UDP-N-acetyl-alpha-D-glucosamine site. Residue His-361 is the Proton acceptor of the active site. Tyr-364 and Asn-375 together coordinate UDP-N-acetyl-alpha-D-glucosamine. Acetyl-CoA contacts are provided by residues 384–385 (NY), Ser-403, Ser-421, and Arg-438.

This sequence in the N-terminal section; belongs to the N-acetylglucosamine-1-phosphate uridyltransferase family. In the C-terminal section; belongs to the transferase hexapeptide repeat family. In terms of assembly, homotrimer. Requires Mg(2+) as cofactor.

The protein resides in the cytoplasm. It catalyses the reaction alpha-D-glucosamine 1-phosphate + acetyl-CoA = N-acetyl-alpha-D-glucosamine 1-phosphate + CoA + H(+). The catalysed reaction is N-acetyl-alpha-D-glucosamine 1-phosphate + UTP + H(+) = UDP-N-acetyl-alpha-D-glucosamine + diphosphate. The protein operates within nucleotide-sugar biosynthesis; UDP-N-acetyl-alpha-D-glucosamine biosynthesis; N-acetyl-alpha-D-glucosamine 1-phosphate from alpha-D-glucosamine 6-phosphate (route II): step 2/2. It functions in the pathway nucleotide-sugar biosynthesis; UDP-N-acetyl-alpha-D-glucosamine biosynthesis; UDP-N-acetyl-alpha-D-glucosamine from N-acetyl-alpha-D-glucosamine 1-phosphate: step 1/1. Its pathway is bacterial outer membrane biogenesis; LPS lipid A biosynthesis. Functionally, catalyzes the last two sequential reactions in the de novo biosynthetic pathway for UDP-N-acetylglucosamine (UDP-GlcNAc). The C-terminal domain catalyzes the transfer of acetyl group from acetyl coenzyme A to glucosamine-1-phosphate (GlcN-1-P) to produce N-acetylglucosamine-1-phosphate (GlcNAc-1-P), which is converted into UDP-GlcNAc by the transfer of uridine 5-monophosphate (from uridine 5-triphosphate), a reaction catalyzed by the N-terminal domain. The sequence is that of Bifunctional protein GlmU from Alkaliphilus metalliredigens (strain QYMF).